The following is an 818-amino-acid chain: Response regulator SSK1 (818 aa).

The region spanning 611-769 (NVLIVEDNPI…WLERKVMEWG (159 aa)) is the Response regulatory domain. At Asp-660 the chain carries 4-aspartylphosphate.

It belongs to the SSK1 family.

It is found in the cytoplasm. In terms of biological role, two-domain response regulator protein in the two-component signal transduction system of the HOG1 pathway. Modulates stress response, melanin biosynthesis and virulence via its regulation of the phosphorylation of HOG1. The sequence is that of Response regulator SSK1 from Verticillium dahliae (strain VdLs.17 / ATCC MYA-4575 / FGSC 10137) (Verticillium wilt).